The following is a 574-amino-acid chain: Putative ABC transporter ATP-binding protein VV2_1533 (574 aa).

2 ABC transporter domains span residues 3–244 (IEFS…GIRE) and 299–533 (LDVR…ANLT). Residues 37–44 (GPSGSGKS) and 332–339 (GKNGSGKS) contribute to the ATP site.

The protein belongs to the ABC transporter superfamily.

It is found in the cell inner membrane. Probably part of an ABC transporter complex. Responsible for energy coupling to the transport system. In Vibrio vulnificus (strain CMCP6), this protein is Putative ABC transporter ATP-binding protein VV2_1533.